Reading from the N-terminus, the 45-residue chain is Cytochrome b559 subunit beta (45 aa).

The chain crosses the membrane as a helical span at residues 20 to 36 (WLAVHTLAVPTVFFLGA). Residue His-24 participates in heme binding.

Belongs to the PsbE/PsbF family. In terms of assembly, heterodimer of an alpha subunit and a beta subunit. PSII is composed of 1 copy each of membrane proteins PsbA, PsbB, PsbC, PsbD, PsbE, PsbF, PsbH, PsbI, PsbJ, PsbK, PsbL, PsbM, PsbT, PsbX, PsbY, PsbZ, Psb30/Ycf12, peripheral proteins PsbO, CyanoQ (PsbQ), PsbU, PsbV and a large number of cofactors. It forms dimeric complexes. The cofactor is heme b.

The protein resides in the cellular thylakoid membrane. Its function is as follows. This b-type cytochrome is tightly associated with the reaction center of photosystem II (PSII). PSII is a light-driven water:plastoquinone oxidoreductase that uses light energy to abstract electrons from H(2)O, generating O(2) and a proton gradient subsequently used for ATP formation. It consists of a core antenna complex that captures photons, and an electron transfer chain that converts photonic excitation into a charge separation. The polypeptide is Cytochrome b559 subunit beta (Trichormus variabilis (strain ATCC 29413 / PCC 7937) (Anabaena variabilis)).